A 403-amino-acid polypeptide reads, in one-letter code: Argininosuccinate synthase (403 aa).

Residues 10-18 (AYSGGVDTS) and A38 contribute to the ATP site. Y89 serves as a coordination point for L-citrulline. G119 contacts ATP. Residues T121, N125, and D126 each coordinate L-aspartate. An L-citrulline-binding site is contributed by N125. Residues R129, S177, S186, E262, and Y274 each coordinate L-citrulline.

This sequence belongs to the argininosuccinate synthase family. Type 1 subfamily. As to quaternary structure, homotetramer.

Its subcellular location is the cytoplasm. It catalyses the reaction L-citrulline + L-aspartate + ATP = 2-(N(omega)-L-arginino)succinate + AMP + diphosphate + H(+). It participates in amino-acid biosynthesis; L-arginine biosynthesis; L-arginine from L-ornithine and carbamoyl phosphate: step 2/3. This Parasynechococcus marenigrum (strain WH8102) protein is Argininosuccinate synthase.